Consider the following 478-residue polypeptide: Flotillin-like protein 1 (478 aa).

The S-palmitoyl cysteine moiety is linked to residue Cys-35. Residues 235–277 (ENQREAEVAEANSELAKKKAAWTMAAQVAELEAAKAVALREAE) adopt a coiled-coil conformation.

The protein belongs to the band 7/mec-2 family. Flotillin subfamily. Post-translationally, may be palmitoylated. As to expression, expressed in all plant organs. Primarily expressed in vascular tissues. No change in spatial expression in root upon inoculation. Expression limited to the nodule vascular tissue.

It is found in the cell membrane. It localises to the membrane. The protein resides in the caveola. May act as a scaffolding protein within caveolar membranes, functionally participating in formation of caveolae or caveolae-like vesicles. May be involved in nodule formation. The protein is Flotillin-like protein 1 (FLOT1) of Medicago truncatula (Barrel medic).